The chain runs to 521 residues: Zinc finger protein 394 (521 aa).

The tract at residues 1 to 45 (MAAGSGVVPPPLGAGLCTVKVEEDSPGNQESSGSGDWQNPETSRK) is disordered. A Glycyl lysine isopeptide (Lys-Gly) (interchain with G-Cter in SUMO2) cross-link involves residue Lys20. Positions 26–41 (PGNQESSGSGDWQNPE) are enriched in polar residues. Residues 38–133 (QNPETSRKQF…RALDRASPQG (96 aa)) enclose the SCAN box domain. A KRAB domain is found at 135 to 196 (MTFKDVAESL…KQEILKEAEP (62 aa)). Residue Lys259 forms a Glycyl lysine isopeptide (Lys-Gly) (interchain with G-Cter in SUMO2) linkage. 3 C2H2-type zinc fingers span residues 327–349 (YKCDSCEKGFRQRSDLFKHQRIH), 355–377 (YQCQECGKRFSQSAALVKHQRTH), and 383–405 (YACPECGECFRQSSHLSRHQRTH). Residues 411 to 432 (YKCEECGEIVHVSSLFRHQRLH) form a C2H2-type 4; atypical zinc finger. Residue Lys412 forms a Glycyl lysine isopeptide (Lys-Gly) (interchain with G-Cter in SUMO2) linkage. 3 C2H2-type zinc fingers span residues 438-460 (YKCGDCEKSFRQRSDLFKHQRTH), 466-488 (YACVVCGRRFSQSATLIKHQRTH), and 494-516 (YKCFQCGERFRQSTHLVRHQRIH).

It belongs to the krueppel C2H2-type zinc-finger protein family. In terms of tissue distribution, expressed at high level in testis.

It is found in the nucleus. Functionally, may be involved in transcriptional regulation. The polypeptide is Zinc finger protein 394 (Znf394) (Mus musculus (Mouse)).